A 686-amino-acid chain; its full sequence is Glycine--tRNA ligase beta subunit (686 aa).

The tract at residues 65–99 is disordered; sequence ALSEEKRGPSVERAKDENGEWSKAAQGFARGQGAT. Residues 67–84 show a composition bias toward basic and acidic residues; it reads SEEKRGPSVERAKDENGE.

This sequence belongs to the class-II aminoacyl-tRNA synthetase family. As to quaternary structure, tetramer of two alpha and two beta subunits.

Its subcellular location is the cytoplasm. It carries out the reaction tRNA(Gly) + glycine + ATP = glycyl-tRNA(Gly) + AMP + diphosphate. The chain is Glycine--tRNA ligase beta subunit from Leuconostoc citreum (strain KM20).